Reading from the N-terminus, the 862-residue chain is MASEDRYNVKETEAKWQTAWAEGGCFTAREDRTRPKYYVLEMFPYPSGRIHMGHVRNYTLGDVVARFKRAQGFNVLHPMGWDAFGLPAENAAIQRGVHPATWTRQNIAIMREQFKPMGLSIDWSREVSTCEPAYYRHEQKMFLDFLKAGLAYRRESWVNWDPVEHTVLANEQVIDGKGWRSGAPVERRKLSQWFLRITRYAEDLLAAIGDLDRWPDKVRLMQTNWIGRSEGARVRFGLVGRDQALEVYTTRPDTLFGASFCAISANHPLAAEIAATNPDLAAFIAECGRMGTSEVEIETAEKKGFDTGLKVRHPFDPAWELPVYVANFVLMEYGTGAIFGCPAHDQRDMDFARKYGLPVRAVVAPAGVDAEAFAKDLEASDTAFSEDGVAIASGFLDGLPVSEAKARAIAHIAELGAGEGVVQFRLRDWGVSRQRYWGCPIPIIHCDDCGPVPVPEDQLPVLLPEDVTFDKPGNPLDHHPTWKHVACPQCGKPARRETDTFDTFFESSWYFARFCAPHDTDRAFEREAVDYWLPVDQYVGGVEHAVLHLLYSRFFTRALRDCGYLGVSEPFTGLFTQGMICHETYRDTDGAWLSPDQIDKAADGTATLLSDGSPVSVGRSEKMSKSKMNTVDPTAILESYGADAARLFMLSDSPPDRDMDWTDSGIEGAWRYIGRLWRMALQPQIDPGAVGAPLPADLGPGAAALVRHVHKAVAGVTDDLEKFRFNAAVARLRELTNAIAALDGKEAGAGAVYRFALETAARLAAPMIPHIAEEMWSHLGRDGLLAETPWPTWDPLMLIDDQVTIAVQVNGKMRGTVDLPKDAKREDAEAAALALPTVLAQLAGAAPRKVIVVPNRIINVVV.

Residues 44-54 (PYPSGRIHMGH) carry the 'HIGH' region motif. The 'KMSKS' region motif lies at 622 to 626 (KMSKS). Residue lysine 625 participates in ATP binding.

The protein belongs to the class-I aminoacyl-tRNA synthetase family.

The protein localises to the cytoplasm. It catalyses the reaction tRNA(Leu) + L-leucine + ATP = L-leucyl-tRNA(Leu) + AMP + diphosphate. This chain is Leucine--tRNA ligase, found in Rhodospirillum rubrum (strain ATCC 11170 / ATH 1.1.1 / DSM 467 / LMG 4362 / NCIMB 8255 / S1).